The chain runs to 196 residues: Holliday junction branch migration complex subunit RuvA (196 aa).

Residues 1–62 (MYEYINGLIT…ENEMTLYGFI (62 aa)) form a domain I region. The domain II stretch occupies residues 63-141 (DENEKYLFNK…DLALSAGMTV (79 aa)). The interval 142-146 (ETVPT) is flexible linker. Residues 147-196 (TDNQALADALAALESLGYSAKDVAKLQTVLANQKDTTDGYIRSALKFLVK) form a domain III region.

Belongs to the RuvA family. As to quaternary structure, homotetramer. Forms an RuvA(8)-RuvB(12)-Holliday junction (HJ) complex. HJ DNA is sandwiched between 2 RuvA tetramers; dsDNA enters through RuvA and exits via RuvB. An RuvB hexamer assembles on each DNA strand where it exits the tetramer. Each RuvB hexamer is contacted by two RuvA subunits (via domain III) on 2 adjacent RuvB subunits; this complex drives branch migration. In the full resolvosome a probable DNA-RuvA(4)-RuvB(12)-RuvC(2) complex forms which resolves the HJ.

Its subcellular location is the cytoplasm. Its function is as follows. The RuvA-RuvB-RuvC complex processes Holliday junction (HJ) DNA during genetic recombination and DNA repair, while the RuvA-RuvB complex plays an important role in the rescue of blocked DNA replication forks via replication fork reversal (RFR). RuvA specifically binds to HJ cruciform DNA, conferring on it an open structure. The RuvB hexamer acts as an ATP-dependent pump, pulling dsDNA into and through the RuvAB complex. HJ branch migration allows RuvC to scan DNA until it finds its consensus sequence, where it cleaves and resolves the cruciform DNA. The sequence is that of Holliday junction branch migration complex subunit RuvA from Leuconostoc citreum (strain KM20).